A 412-amino-acid polypeptide reads, in one-letter code: Inositol polyphosphate-5-phosphatase A (412 aa).

The S-farnesyl cysteine moiety is linked to residue C409. Positions 410–412 (VVQ) are cleaved as a propeptide — removed in mature form.

The protein belongs to the inositol 1,4,5-trisphosphate 5-phosphatase type I family. Interacts with TASOR. Isoprenylation at Cys-409 is required for localization at the membrane. Expressed at high levels in cerebellar Purkinje cells (at protein level). Expressed in Sertoli cells of the testis.

It localises to the cell membrane. It is found in the cell projection. The protein localises to the dendrite. It catalyses the reaction 1D-myo-inositol 1,4,5-trisphosphate + H2O = 1D-myo-inositol 1,4-bisphosphate + phosphate. The catalysed reaction is 1D-myo-inositol 1,3,4,5-tetrakisphosphate + H2O = 1D-myo-inositol 1,3,4-trisphosphate + phosphate. Its function is as follows. Phosphatase that specifically hydrolyzes the 5-phosphate of inositol 1,4,5-trisphosphate to inositol 1,4-bisphosphate, and inositol 1,3,4,5-tetrasphosphate to inositol 1,3,4-trisphosphate. Plays a crucial role in the survival of cerebellar Purkinje cells. The sequence is that of Inositol polyphosphate-5-phosphatase A (Inpp5a) from Mus musculus (Mouse).